Here is a 468-residue protein sequence, read N- to C-terminus: Peroxisome proliferator-activated receptor alpha (468 aa).

The nuclear receptor DNA-binding region spans 99 to 173 (NIECRICGDK…VGMSHNAIRF (75 aa)). 2 consecutive NR C4-type zinc fingers follow at residues 102–122 (CRIC…CEGC) and 139–161 (CDRS…FHKC). Residues 239–466 (FVIHDMETLC…HPLLQEIYRD (228 aa)) enclose the NR LBD domain. A required for heterodimerization with RXRA region spans residues 304–433 (DQVTLLKYGV…PKLLQKMVDL (130 aa)).

The protein belongs to the nuclear hormone receptor family. NR1 subfamily. Heterodimer; with RXRA. This heterodimerization is required for DNA binding and transactivation activity. Interacts with NCOA3 coactivator. Interacts with CITED2; the interaction stimulates its transcriptional activity. Also interacts with PPARBP in vitro. Interacts with AKAP13, LPIN1, PRDM16 and coactivator NCOA6. Interacts with ASXL1 and ASXL2. Interacts with PER2. Interacts with SIRT1; the interaction seems to be modulated by NAD(+) levels. Interacts with CRY1 and CRY2. In hepatocytes, interacts with PAQR3 and HUWE1; the interactions promote PPARA poylubiquitination and HUWE1-mediated degradation. Phosphorylated. In terms of processing, ubiquitinated by E3 ubiquitin-protein ligase HUWE1; leading to proteasomal degradation. As to expression, expressed predominantly in liver and kidney.

Its subcellular location is the nucleus. Ligand-activated transcription factor. Key regulator of lipid metabolism. Activated by the endogenous ligand 1-palmitoyl-2-oleoyl-sn-glycerol-3-phosphocholine (16:0/18:1-GPC). Activated by oleylethanolamide, a naturally occurring lipid that regulates satiety. Receptor for peroxisome proliferators such as hypolipidemic drugs and fatty acids. Regulates the peroxisomal beta-oxidation pathway of fatty acids. Functions as a transcription activator for the ACOX1 and P450 genes. Transactivation activity requires heterodimerization with RXRA and is antagonized by NR2C2. May be required for the propagation of clock information to metabolic pathways regulated by PER2. This is Peroxisome proliferator-activated receptor alpha (Ppara) from Rattus norvegicus (Rat).